The chain runs to 232 residues: Izumo sperm-egg fusion protein 4 (232 aa).

The first 15 residues, 1–15 (MALLLCLVCLTAALA), serve as a signal peptide directing secretion. N-linked (GlcNAc...) asparagine glycosylation is found at asparagine 24 and asparagine 219.

Belongs to the Izumo family. In terms of tissue distribution, detected in sperm.

It is found in the secreted. The chain is Izumo sperm-egg fusion protein 4 (IZUMO4) from Homo sapiens (Human).